A 559-amino-acid polypeptide reads, in one-letter code: Leucine-rich repeat protein soc-2 (559 aa).

A compositionally biased stretch (basic and acidic residues) spans 1–17 (METSKEFEFRPAKETSR). Residues 1–55 (METSKEFEFRPAKETSRSKSPGGIVGRLSNFARNKARHSLSEKGSNSVGGSGGAG) form a disordered region. LRR repeat units lie at residues 74 to 95 (QDQR…IKEL), 97 to 118 (QLTE…IGQL), 120 to 142 (NLKK…ASLE), 143 to 164 (SLET…IYKI), 166 to 187 (SLET…IGNL), 189 to 210 (KLKM…IGKL), 212 to 233 (SLVV…IGDC), 235 to 256 (SLTQ…IGKL), 258 to 279 (NLVR…LESC), 281 to 302 (QLEE…LLTM), 305 to 326 (KIHT…GPQQ), 329 to 350 (STVT…IFSK), 353 to 374 (RLTK…MGSW), 376 to 397 (SITE…IEKL), 399 to 420 (NLEI…IGNL), 422 to 443 (KLRE…IGFL), 445 to 466 (HLTK…IGNL), 468 to 489 (SLQD…IGHL), 491 to 513 (SLKS…LALC), and 515 to 536 (SLEI…ITAG).

Belongs to the SHOC2 family. In terms of assembly, interacts with let-60.

Its function is as follows. Acts as a Ras effector and participates in MAPK pathway activation. Probably acts as a scaffolding protein in a protein phosphatase complex that specifically dephosphorylates Raf kinase and stimulates Raf activity at specialized signaling complexes upon Ras activation. Required for vulval development. Involved in fluid homeostasis. Plays a role in nicotinic acetylcholine receptor (nAChR)-mediated sensitivity to nicotine. The polypeptide is Leucine-rich repeat protein soc-2 (soc-2) (Caenorhabditis elegans).